The primary structure comprises 614 residues: V-type proton ATPase catalytic subunit A (614 aa).

247–254 (GAFGCGKT) lines the ATP pocket.

The protein belongs to the ATPase alpha/beta chains family. As to quaternary structure, V-ATPase is a heteromultimeric enzyme made up of two complexes: the ATP-hydrolytic V1 complex and the proton translocation V0 complex. The V1 complex consists of three catalytic AB heterodimers that form a heterohexamer, three peripheral stalks each consisting of EG heterodimers, one central rotor including subunits D and F, and the regulatory subunits C and H. The proton translocation complex V0 consists of the proton transport subunit a, a ring of proteolipid subunits c9c'', rotary subunit d, subunits e and f, and the accessory subunits VhaAC45 and ATP6AP2.

The enzyme catalyses ATP + H2O + 4 H(+)(in) = ADP + phosphate + 5 H(+)(out). Its activity is regulated as follows. ATP hydrolysis occurs at the interface between the nucleotide-binding domains of subunits A and B. ATP hydrolysis triggers a conformational change in the subunits D and F, which induces a shift of subunit d. The c-ring is subsequently rotated and results in a continuous proton translocation across the membrane. Its function is as follows. Catalytic subunit of the V1 complex of vacuolar(H+)-ATPase (V-ATPase), a multisubunit enzyme composed of a peripheral complex (V1) that hydrolyzes ATP and a membrane integral complex (V0) that translocates protons. V-ATPase is responsible for acidifying and maintaining the pH of intracellular compartments and in some cell types, is targeted to the plasma membrane, where it is responsible for acidifying the extracellular environment. This chain is V-type proton ATPase catalytic subunit A, found in Anopheles gambiae (African malaria mosquito).